Reading from the N-terminus, the 182-residue chain is Transcription antitermination protein NusB (182 aa).

The segment at T159–Q182 is disordered.

Belongs to the NusB family.

Involved in transcription antitermination. Required for transcription of ribosomal RNA (rRNA) genes. Binds specifically to the boxA antiterminator sequence of the ribosomal RNA (rrn) operons. This chain is Transcription antitermination protein NusB, found in Corynebacterium diphtheriae (strain ATCC 700971 / NCTC 13129 / Biotype gravis).